The sequence spans 396 residues: Digeranylgeranylglycerophospholipid reductase 2 (396 aa).

FAD contacts are provided by Ala-13, Glu-32, Cys-43, Ala-44, Gly-46, Arg-92, Ala-116, Asp-278, Gly-290, and Leu-291.

It belongs to the geranylgeranyl reductase family. DGGGPL reductase subfamily. It depends on FAD as a cofactor.

The enzyme catalyses a 2,3-bis-O-phytanyl-sn-glycerol 1-phospholipid + 8 A = a 2,3-bis-O-(geranylgeranyl)-sn-glycerol 1-phospholipid + 8 AH2. The catalysed reaction is 2,3-bis-O-(phytanyl)-sn-glycerol 1-phosphate + 8 A = 2,3-bis-O-(geranylgeranyl)-sn-glycerol 1-phosphate + 8 AH2. It catalyses the reaction CDP-2,3-bis-O-(geranylgeranyl)-sn-glycerol + 8 AH2 = CDP-2,3-bis-O-(phytanyl)-sn-glycerol + 8 A. It carries out the reaction archaetidylserine + 8 AH2 = 2,3-bis-O-phytanyl-sn-glycero-3-phospho-L-serine + 8 A. Its pathway is membrane lipid metabolism; glycerophospholipid metabolism. Functionally, is involved in the reduction of 2,3-digeranylgeranylglycerophospholipids (unsaturated archaeols) into 2,3-diphytanylglycerophospholipids (saturated archaeols) in the biosynthesis of archaeal membrane lipids. Catalyzes the formation of archaetidic acid (2,3-di-O-phytanyl-sn-glyceryl phosphate) from 2,3-di-O-geranylgeranylglyceryl phosphate (DGGGP) via the hydrogenation of each double bond of the isoprenoid chains. Is also probably able to reduce double bonds of geranyl groups in CDP-2,3-bis-O-(geranylgeranyl)-sn-glycerol and archaetidylserine, thus acting at various stages in the biosynthesis of archaeal membrane lipids. This chain is Digeranylgeranylglycerophospholipid reductase 2, found in Methanopyrus kandleri (strain AV19 / DSM 6324 / JCM 9639 / NBRC 100938).